Reading from the N-terminus, the 446-residue chain is Exopolygalacturonase (446 aa).

Residues 1–17 (MRVTDIISCALLQASIA) form the signal peptide. N-linked (GlcNAc...) asparagine glycans are attached at residues N53, N118, N134, and N204. One copy of the PbH1 1 repeat lies at 236-257 (SDNIIIQNSNINNGDDCVSFKP). Catalysis depends on D250, which acts as the Proton donor. C252 and C269 are disulfide-bonded. N-linked (GlcNAc...) asparagine glycans are attached at residues N258 and N270. PbH1 repeat units lie at residues 259-279 (STNI…SVGS), 290-311 (VENI…RIKV), and 332-353 (VRNV…EITQ). H273 is an active-site residue. Residues N297, N302, N334, N359, and N369 are each glycosylated (N-linked (GlcNAc...) asparagine). PbH1 repeat units follow at residues 367-398 (PSNL…VVCS) and 403-434 (CSDI…QSQV). Intrachain disulfides connect C397-C403 and C424-C436. Residue N435 is glycosylated (N-linked (GlcNAc...) asparagine).

This sequence belongs to the glycosyl hydrolase 28 family.

The protein localises to the secreted. It catalyses the reaction [(1-&gt;4)-alpha-D-galacturonosyl](n) + H2O = alpha-D-galacturonate + [(1-&gt;4)-alpha-D-galacturonosyl](n-1). Hydrolysis of 1,4-alpha-D-galactosiduronic linkages in pectate and other galacturonans. The sequence is that of Exopolygalacturonase (PGX1) from Cochliobolus carbonum (Maize leaf spot fungus).